A 126-amino-acid polypeptide reads, in one-letter code: S-adenosylmethionine decarboxylase proenzyme (126 aa).

The active-site Schiff-base intermediate with substrate; via pyruvic acid is the S63. Position 63 is a pyruvic acid (Ser); by autocatalysis (S63). Catalysis depends on H68, which acts as the Proton acceptor; for processing activity. Catalysis depends on C83, which acts as the Proton donor; for catalytic activity.

Belongs to the prokaryotic AdoMetDC family. Type 1 subfamily. In terms of assembly, heterotetramer of two alpha and two beta chains arranged as a dimer of alpha/beta heterodimers. The cofactor is pyruvate. In terms of processing, is synthesized initially as an inactive proenzyme. Formation of the active enzyme involves a self-maturation process in which the active site pyruvoyl group is generated from an internal serine residue via an autocatalytic post-translational modification. Two non-identical subunits are generated from the proenzyme in this reaction, and the pyruvate is formed at the N-terminus of the alpha chain, which is derived from the carboxyl end of the proenzyme. The post-translation cleavage follows an unusual pathway, termed non-hydrolytic serinolysis, in which the side chain hydroxyl group of the serine supplies its oxygen atom to form the C-terminus of the beta chain, while the remainder of the serine residue undergoes an oxidative deamination to produce ammonia and the pyruvoyl group blocking the N-terminus of the alpha chain.

It carries out the reaction S-adenosyl-L-methionine + H(+) = S-adenosyl 3-(methylsulfanyl)propylamine + CO2. It functions in the pathway amine and polyamine biosynthesis; S-adenosylmethioninamine biosynthesis; S-adenosylmethioninamine from S-adenosyl-L-methionine: step 1/1. Its function is as follows. Catalyzes the decarboxylation of S-adenosylmethionine to S-adenosylmethioninamine (dcAdoMet), the propylamine donor required for the synthesis of the polyamines spermine and spermidine from the diamine putrescine. The polypeptide is S-adenosylmethionine decarboxylase proenzyme (Pelotomaculum thermopropionicum (strain DSM 13744 / JCM 10971 / SI)).